The following is a 140-amino-acid chain: Large ribosomal subunit protein uL14 (140 aa).

At Ser-17 the chain carries Phosphoserine. At Tyr-38 the chain carries Phosphotyrosine.

Belongs to the universal ribosomal protein uL14 family. As to quaternary structure, component of the large ribosomal subunit.

It localises to the cytoplasm. Functionally, component of the large ribosomal subunit. The ribosome is a large ribonucleoprotein complex responsible for the synthesis of proteins in the cell. This chain is Large ribosomal subunit protein uL14 (RPL23), found in Pongo abelii (Sumatran orangutan).